The chain runs to 224 residues: Thymidine kinase, cytosolic (224 aa).

Ser13 bears the Phosphoserine mark. Residues 26 to 33 (GPMFSGKS), 58 to 60 (DTR), and 98 to 101 (DEGQ) contribute to the ATP site. The active-site Proton acceptor is the Glu99. Residue Phe129 coordinates substrate. Residues Cys154 and Cys157 each contribute to the Zn(2+) site. Substrate contacts are provided by residues 173–177 (VEVIG) and Tyr182. The Zn(2+) site is built by Cys186 and Cys189. The KEN box motif lies at 203–205 (KEN).

The protein belongs to the thymidine kinase family. Homotetramer. Tetramerization from dimerization is induced by ATP and increases catalytic efficiency due to a high affinity for thymidine. Tetramerization is inhibited by phosphorylation at Ser-13. Interacts (via the KEN box) with FZR1. In terms of processing, phosphorylated on Ser-13 in mitosis. Phosphorylation of Ser-13 by CDK1 during mitosis reduces homotetramerization and catalytic efficiency when DNA replication is complete and intracellular TK1 is still present at a high level. Polyubiquitinated. Postmitosis, ubiquitination leads to proteasomal degradation. The KEN box sequence located at the C-terminal region targets for degradation by the anaphase promoting complex (APC/C) activated and rate-limited by FZR1.

The protein localises to the cytoplasm. The enzyme catalyses thymidine + ATP = dTMP + ADP + H(+). Its function is as follows. Cell-cycle-regulated enzyme of importance in nucleotide metabolism. Catalyzes the first enzymatic step in the salvage pathway converting thymidine into thymidine monophosphate. Transcriptional regulation limits expression to the S phase of the cell cycle and transient expression coincides with the oscillation in the intracellular dTTP concentration. The protein is Thymidine kinase, cytosolic (TK1) of Gallus gallus (Chicken).